The following is a 132-amino-acid chain: MSFTDPIGDMLTRIRNASNARHEKVLVPASRLKVRIAEVLRDEGFIKDFVRHEDGPQGAITIVLKYSGDREPAISDIKRVSKPGLRRYVPTDSIPRVLNGMGIAILSTSKGVMVDREARKQKVGGELICTVW.

Belongs to the universal ribosomal protein uS8 family. Part of the 30S ribosomal subunit. Contacts proteins S5 and S12.

In terms of biological role, one of the primary rRNA binding proteins, it binds directly to 16S rRNA central domain where it helps coordinate assembly of the platform of the 30S subunit. The chain is Small ribosomal subunit protein uS8 from Anaeromyxobacter sp. (strain Fw109-5).